Consider the following 982-residue polypeptide: Mineralocorticoid receptor (982 aa).

The segment at 1 to 601 is modulating; that stretch reads METKGYHSLP…STGSSRPSKI (601 aa). Residues 230–242 are compositionally biased toward polar residues; that stretch reads QGTPLTCSPNVEN. Disordered stretches follow at residues 230–328 and 345–375; these read QGTP…AAST and SGTSAGSSTSRDVVPSPDTQEKGAQEVPFPK. Phosphoserine is present on residues serine 249, serine 258, serine 282, serine 286, and serine 298. The segment covering 258–299 has biased composition (low complexity); it reads SPLSSPLSSMKSSISSPPSHCSVKSPVSSPNNVTPRSSVSSP. Polar residues predominate over residues 300–328; it reads ANINNSRCSVSSPSNTNNRSTLSSPAAST. Residues 345 to 354 are compositionally biased toward low complexity; that stretch reads SGTSAGSSTS. Positions 602, 605, 619, 622, 638, 644, 654, and 657 each coordinate Zn(2+). 2 NR C4-type zinc fingers span residues 602–622 and 638–662; these read CLVCGDEASGCHYGVVTCGSC and CAGRNDCIIDKIRRKNCPACRLQKC. Residues 602-667 constitute a DNA-binding region (nuclear receptor); it reads CLVCGDEASG…RLQKCLQAGM (66 aa). The segment at 668-723 is hinge; that stretch reads NLGARRSKKLGKLKGIHEEQPQQQPPPPPPPPQSPEEGTTYIAPAKEPSVNTALVP. Residues 682–708 form a disordered region; sequence GIHEEQPQQQPPPPPPPPQSPEEGTTY. The span at 690–701 shows a compositional bias: pro residues; the sequence is QQPPPPPPPPQS. The NR LBD domain maps to 724 to 962; the sequence is QLSAISRALT…EFPAMLVEII (239 aa). Asparagine 768 and glutamine 774 together coordinate 21-hydroxyprogesterone. 2 residues coordinate aldosterone: asparagine 768 and glutamine 774. Positions 768 and 774 each coordinate progesterone. Positions 780-783 are important for coactivator binding; sequence KWAK. Residues arginine 815 and threonine 943 each contribute to the 21-hydroxyprogesterone site. Aldosterone is bound by residues arginine 815 and threonine 943. The progesterone site is built by arginine 815 and threonine 943.

It belongs to the nuclear hormone receptor family. NR3 subfamily. Phosphorylated. In terms of tissue distribution, expressed in hippocampus, being restricted to the more superficial cortical layers.

The protein resides in the cytoplasm. The protein localises to the nucleus. Receptor for both mineralocorticoids (MC) such as aldosterone and glucocorticoids (GC) such as corticosterone or cortisol. Binds to mineralocorticoid response elements (MRE) and transactivates target genes. The effect of MC is to increase ion and water transport and thus raise extracellular fluid volume and blood pressure and lower potassium levels. This chain is Mineralocorticoid receptor (NR3C2), found in Saimiri sciureus (Common squirrel monkey).